A 361-amino-acid chain; its full sequence is tRNA-specific 2-thiouridylase MnmA (361 aa).

Residues alanine 6–serine 13 and leucine 32 each bind ATP. Catalysis depends on cysteine 99, which acts as the Nucleophile. The cysteines at positions 99 and 196 are disulfide-linked. Residue glycine 123 participates in ATP binding. Residues arginine 145–glutamine 147 form an interaction with tRNA region. Catalysis depends on cysteine 196, which acts as the Cysteine persulfide intermediate.

The protein belongs to the MnmA/TRMU family.

It is found in the cytoplasm. It carries out the reaction S-sulfanyl-L-cysteinyl-[protein] + uridine(34) in tRNA + AH2 + ATP = 2-thiouridine(34) in tRNA + L-cysteinyl-[protein] + A + AMP + diphosphate + H(+). Functionally, catalyzes the 2-thiolation of uridine at the wobble position (U34) of tRNA, leading to the formation of s(2)U34. The polypeptide is tRNA-specific 2-thiouridylase MnmA (Gluconobacter oxydans (strain 621H) (Gluconobacter suboxydans)).